The following is a 120-amino-acid chain: Small ribosomal subunit protein uS13 (120 aa).

Residues 93–120 (RKGLPVRGQTTKNNARTRKGKKKTVGSK) are disordered. Basic residues predominate over residues 107–120 (ARTRKGKKKTVGSK).

Belongs to the universal ribosomal protein uS13 family. In terms of assembly, part of the 30S ribosomal subunit. Forms a loose heterodimer with protein S19. Forms two bridges to the 50S subunit in the 70S ribosome.

Its function is as follows. Located at the top of the head of the 30S subunit, it contacts several helices of the 16S rRNA. In the 70S ribosome it contacts the 23S rRNA (bridge B1a) and protein L5 of the 50S subunit (bridge B1b), connecting the 2 subunits; these bridges are implicated in subunit movement. Contacts the tRNAs in the A and P-sites. The chain is Small ribosomal subunit protein uS13 from Helicobacter acinonychis (strain Sheeba).